The primary structure comprises 346 residues: WD repeat-containing protein LWD1 (346 aa).

Met-1 bears the N-acetylmethionine mark. 4 WD repeats span residues 79–121 (EHPY…SRVE), 133–173 (EFCG…VDTQ), 176–214 (AHDK…HSTI), and 265–305 (RHQA…QHVE).

The protein localises to the nucleus. Functionally, clock protein essential for the proper expression phase and period length of both the oscillator and output genes known to participate in photoperiod sensing. Required for the expression of APRR9, APRR7, and APRR5. Regulated by APRR9 and APRR7 at the transcriptional level, indicating the existence of a positive feedback loop within the circadian clock. May function to delay the expression of the morning genes until dawn approaches. The protein is WD repeat-containing protein LWD1 (LWD1) of Arabidopsis thaliana (Mouse-ear cress).